The following is a 180-amino-acid chain: Adenine phosphoribosyltransferase (180 aa).

Belongs to the purine/pyrimidine phosphoribosyltransferase family. Homodimer.

The protein resides in the cytoplasm. The catalysed reaction is AMP + diphosphate = 5-phospho-alpha-D-ribose 1-diphosphate + adenine. The protein operates within purine metabolism; AMP biosynthesis via salvage pathway; AMP from adenine: step 1/1. Catalyzes a salvage reaction resulting in the formation of AMP, that is energically less costly than de novo synthesis. The chain is Adenine phosphoribosyltransferase from Rhizobium meliloti (strain 1021) (Ensifer meliloti).